We begin with the raw amino-acid sequence, 644 residues long: Low affinity sulfate transporter 3 (644 aa).

Positions 1–19 (MSSLGTEQFSERSQWVLNS) are enriched in polar residues. Residues 1–20 (MSSLGTEQFSERSQWVLNSP) form a disordered region. The next 13 helical transmembrane spans lie at 50 to 70 (AVSF…YSAT), 76 to 96 (LLSG…YANL), 99 to 119 (LDPQ…ALMG), 124 to 144 (IAIG…PKVI), 156 to 176 (LVFT…VLRL), 179 to 199 (LVDF…AIVI), 242 to 262 (PLNF…RFIG), 268 to 288 (FFWL…LIVF), 328 to 348 (IGLI…RSFA), 394 to 414 (CKTA…LELF), 418 to 438 (LYYT…PGLI), 455 to 475 (LACL…GLLI), and 518 to 538 (PGIL…AGFV). Residues 511-635 (YPMAVTTPGI…LTVAEAVDAC (125 aa)) enclose the STAS domain.

The protein belongs to the SLC26A/SulP transporter (TC 2.A.53) family.

Its subcellular location is the membrane. Low-affinity H(+)/sulfate cotransporter which may be involved in the internal transport of sulfate between cellular or subcellular compartments within the plant. The sequence is that of Low affinity sulfate transporter 3 (ST3) from Stylosanthes hamata (Caribbean stylo).